A 765-amino-acid chain; its full sequence is E3 ubiquitin-protein ligase SlrP (765 aa).

An interaction with target proteins region spans residues 1-453 (MFNITNIQST…YQGPRVLFAM (453 aa)). LRR repeat units follow at residues 200-219 (QITT…ENLQ), 221-242 (NIKT…LPDT), 243-262 (IQEM…RLPS), 263-284 (ALQS…LPEE), 285-305 (LRYL…LPSE), 306-325 (ITHL…TLPP), 326-346 (GLKT…SLPP), 347-368 (ELQV…LPPT), 369-389 (ITTL…LPAA), and 390-410 (LQIM…LPHF). The tract at residues 454–461 (GDFSIVRV) is linker. The tract at residues 462–765 (TRPLHQAVQG…VSSLMSAYWR (304 aa)) is E3 ubiquitin-protein ligase catalytic domain. One can recognise an NEL domain in the interval 464–758 (PLHQAVQGWL…NILLKKEVSS (295 aa)). Cysteine 546 serves as the catalytic Glycyl thioester intermediate.

Belongs to the LRR-containing bacterial E3 ligase family. Interacts with host TXN. Ubiquitinated in the presence of host E1 ubiquitin-activating enzyme, E2 ubiquitin-conjugating enzyme and ubiquitin.

The protein localises to the secreted. It localises to the host cytoplasm. It carries out the reaction S-ubiquitinyl-[E2 ubiquitin-conjugating enzyme]-L-cysteine + [acceptor protein]-L-lysine = [E2 ubiquitin-conjugating enzyme]-L-cysteine + N(6)-ubiquitinyl-[acceptor protein]-L-lysine.. Its function is as follows. Effector proteins function to alter host cell physiology and promote bacterial survival in host tissues. This protein is an E3 ubiquitin ligase that interferes with host's ubiquitination pathway. Can ubiquitinate both ubiquitin and host TXN (thioredoxin). Leads to significant decrease of thioredoxin activity and increase of host cell death. The protein is E3 ubiquitin-protein ligase SlrP (slrP) of Salmonella typhimurium (strain 14028s / SGSC 2262).